Reading from the N-terminus, the 600-residue chain is Elongation factor 4 (600 aa).

Positions 5–187 (KYIRNFSIIA…AIVNKLPPPK (183 aa)) constitute a tr-type G domain. Residues 17 to 22 (DHGKST) and 134 to 137 (NKID) contribute to the GTP site.

The protein belongs to the TRAFAC class translation factor GTPase superfamily. Classic translation factor GTPase family. LepA subfamily.

It localises to the cell inner membrane. It catalyses the reaction GTP + H2O = GDP + phosphate + H(+). Functionally, required for accurate and efficient protein synthesis under certain stress conditions. May act as a fidelity factor of the translation reaction, by catalyzing a one-codon backward translocation of tRNAs on improperly translocated ribosomes. Back-translocation proceeds from a post-translocation (POST) complex to a pre-translocation (PRE) complex, thus giving elongation factor G a second chance to translocate the tRNAs correctly. Binds to ribosomes in a GTP-dependent manner. This chain is Elongation factor 4, found in Rickettsia canadensis (strain McKiel).